We begin with the raw amino-acid sequence, 112 residues long: Large ribosomal subunit protein uL22 (112 aa).

The protein belongs to the universal ribosomal protein uL22 family. In terms of assembly, part of the 50S ribosomal subunit.

Functionally, this protein binds specifically to 23S rRNA; its binding is stimulated by other ribosomal proteins, e.g. L4, L17, and L20. It is important during the early stages of 50S assembly. It makes multiple contacts with different domains of the 23S rRNA in the assembled 50S subunit and ribosome. The globular domain of the protein is located near the polypeptide exit tunnel on the outside of the subunit, while an extended beta-hairpin is found that lines the wall of the exit tunnel in the center of the 70S ribosome. The sequence is that of Large ribosomal subunit protein uL22 from Lawsonia intracellularis (strain PHE/MN1-00).